Reading from the N-terminus, the 212-residue chain is Large ribosomal subunit protein bL25 (212 aa).

Positions 181-212 (LSEPKEEVIEEDVEEVSADVPTVSETEEEDAE) are disordered. Acidic residues predominate over residues 188 to 197 (VIEEDVEEVS).

Belongs to the bacterial ribosomal protein bL25 family. CTC subfamily. As to quaternary structure, part of the 50S ribosomal subunit; part of the 5S rRNA/L5/L18/L25 subcomplex. Contacts the 5S rRNA. Binds to the 5S rRNA independently of L5 and L18.

This is one of the proteins that binds to the 5S RNA in the ribosome where it forms part of the central protuberance. This chain is Large ribosomal subunit protein bL25, found in Finegoldia magna (strain ATCC 29328 / DSM 20472 / WAL 2508) (Peptostreptococcus magnus).